The primary structure comprises 539 residues: Polyol transporter 5 (539 aa).

Over residues 1-11 the composition is skewed to polar residues; sequence MTGATPENRTA. Positions 1–24 are disordered; that stretch reads MTGATPENRTAPSPPPVKHVPESV. Transmembrane regions (helical) follow at residues 37 to 57, 73 to 93, 104 to 124, 127 to 147, 165 to 185, 196 to 216, 296 to 316, 333 to 353, 364 to 384, 391 to 411, 433 to 453, and 463 to 483; these read FACA…IGVM, LQIG…SCAA, YTIV…GLSP, AFLM…LMIA, SFPE…NLAF, LMLG…LAMP, IAAI…VVLF, LLAT…ATFL, LTSV…LTII, VMWA…TFSI, GSSM…ISFL, and GAFY…YTFL. Basic and acidic residues-rich tracts occupy residues 503-514 and 530-539; these read WRDSKSKPKGNP and QWKEGDTQSS. The interval 503 to 539 is disordered; the sequence is WRDSKSKPKGNPEKTVPNPEVEIGSNKQWKEGDTQSS.

It belongs to the major facilitator superfamily. Sugar transporter (TC 2.A.1.1) family. In terms of tissue distribution, highly expressed in roots. Expressed in vascular tissue of leaves, sepals and siliques.

The protein localises to the cell membrane. Functionally, plasma membrane broad-spectrum sugar-proton symporter. Mediates the uptake of linear polyols such as sorbitol, xylitol, erythritol or glycerol. Can transport the cyclic polyol myo-inositol and different hexoses, pentoses (including ribose), tetroses and sugar alcohols. The chain is Polyol transporter 5 (PLT5) from Arabidopsis thaliana (Mouse-ear cress).